The following is a 360-amino-acid chain: Archaemetzincin-2 (360 aa).

Residue His-254 participates in Zn(2+) binding. The active-site Proton acceptor is the Glu-255. Zn(2+)-binding residues include His-258, His-264, Cys-265, Cys-270, Cys-289, and Cys-292.

The protein belongs to the peptidase M54 family. Zn(2+) serves as cofactor.

Functionally, probable zinc metalloprotease. This is Archaemetzincin-2 (AMZ2) from Macaca fascicularis (Crab-eating macaque).